Here is a 297-residue protein sequence, read N- to C-terminus: Cytosolic Fe-S cluster assembly factor CFD1 (297 aa).

15–22 (GKGGVGKS) provides a ligand contact to ATP. Positions 216 and 219 each coordinate [4Fe-4S] cluster.

This sequence belongs to the Mrp/NBP35 ATP-binding proteins family. NUBP2/CFD1 subfamily. Heterotetramer of 2 NBP35 and 2 CFD1 chains. The cofactor is [4Fe-4S] cluster.

It localises to the cytoplasm. Its function is as follows. Component of the cytosolic iron-sulfur (Fe/S) protein assembly (CIA) machinery. Required for maturation of extramitochondrial Fe-S proteins. The NBP35-CFD1 heterotetramer forms a Fe-S scaffold complex, mediating the de novo assembly of an Fe-S cluster and its transfer to target apoproteins. The chain is Cytosolic Fe-S cluster assembly factor CFD1 from Phaeosphaeria nodorum (strain SN15 / ATCC MYA-4574 / FGSC 10173) (Glume blotch fungus).